The sequence spans 471 residues: Collagenase 3 (471 aa).

The signal sequence occupies residues 1–19 (MHPGVLAAFLFLSWTHCRA). The propeptide at 20-103 (LPLPSGGDED…PRCGVPDVGE (84 aa)) is activation peptide. The Cysteine switch motif lies at 94-101 (PRCGVPDV). A Zn(2+)-binding site is contributed by C96. Residue N117 is glycosylated (N-linked (GlcNAc...) asparagine). D128 provides a ligand contact to Ca(2+). N152 carries an N-linked (GlcNAc...) asparagine glycan. D162 contacts Ca(2+). Zn(2+)-binding residues include H172 and D174. The interval 176–246 (YPFDGPSGLL…GALMFPIYTY (71 aa)) is interaction with TIMP2. The Ca(2+) site is built by D179, G180, S182, and L184. H187 is a binding site for Zn(2+). 3 residues coordinate Ca(2+): N194, G196, and D198. Zn(2+) is bound at residue H200. 3 residues coordinate Ca(2+): D202, D203, and E205. Residue H222 coordinates Zn(2+). The active site involves E223. Residues H226, H232, and M240 each coordinate Zn(2+). Positions 263–284 (QSLYGPGDEDPNPKHPKTPDKC) are disordered. Residues 268–471 (PGDEDPNPKH…VMPANSILWC (204 aa)) form an interaction with collagen region. A compositionally biased stretch (basic and acidic residues) spans 273-284 (PNPKHPKTPDKC). 4 Hemopexin repeats span residues 281–330 (PDKC…WPEL), 331–377 (PNRI…GLPK), 379–427 (VKKI…FPGI), and 428–471 (GDKV…ILWC). C284 and C471 are disulfide-bonded. D291, I293, D335, and A337 together coordinate Ca(2+). At Y366 the chain carries Phosphotyrosine; by PKDCC. The Ca(2+) site is built by S383, A385, D432, and V434.

This sequence belongs to the peptidase M10A family. As to quaternary structure, monomer. Interacts with TIMP1, TIMP2 and TIMP3. Binds (via the C-terminal region) to collagen. It depends on Ca(2+) as a cofactor. Zn(2+) serves as cofactor. In terms of processing, the proenzyme is activated by removal of the propeptide; this cleavage can be effected by other matrix metalloproteinases, such as MMP2, MMP3 and MMP14 and may involve several cleavage steps. Cleavage can also be autocatalytic, after partial maturation by another protease or after treatment with 4-aminophenylmercuric acetate (APMA) (in vitro). Post-translationally, N-glycosylated. Tyrosine phosphorylated by PKDCC/VLK. Detected in fetal cartilage and calvaria, in chondrocytes of hypertrophic cartilage in vertebrae and in the dorsal end of ribs undergoing ossification, as well as in osteoblasts and periosteal cells below the inner periosteal region of ossified ribs. Detected in chondrocytes from in joint cartilage that have been treated with TNF and IL1B, but not in untreated chondrocytes. Detected in T lymphocytes. Detected in breast carcinoma tissue.

It localises to the secreted. The protein localises to the extracellular space. It is found in the extracellular matrix. Inhibited by TIMP1, TIMP2 and TIMP3. Inhibited by acetohydroxamic acid and other zinc chelators. Its function is as follows. Plays a role in the degradation of extracellular matrix proteins including fibrillar collagen, fibronectin, TNC and ACAN. Cleaves triple helical collagens, including type I, type II and type III collagen, but has the highest activity with soluble type II collagen. Can also degrade collagen type IV, type XIV and type X. May also function by activating or degrading key regulatory proteins, such as TGFB1 and CCN2. Plays a role in wound healing, tissue remodeling, cartilage degradation, bone development, bone mineralization and ossification. Required for normal embryonic bone development and ossification. Plays a role in the healing of bone fractures via endochondral ossification. Plays a role in wound healing, probably by a mechanism that involves proteolytic activation of TGFB1 and degradation of CCN2. Plays a role in keratinocyte migration during wound healing. May play a role in cell migration and in tumor cell invasion. The polypeptide is Collagenase 3 (MMP13) (Homo sapiens (Human)).